Here is a 98-residue protein sequence, read N- to C-terminus: Putative defensin-like protein 233 (98 aa).

The N-terminal stretch at 1 to 28 (MGMWCTTLFMVSCVSICLILSHVQEVEA) is a signal peptide. 4 cysteine pairs are disulfide-bonded: cysteine 35/cysteine 96, cysteine 45/cysteine 70, cysteine 53/cysteine 86, and cysteine 68/cysteine 88.

Belongs to the DEFL family. In terms of tissue distribution, expressed at least in stem, root, rosette leaves and flower buds.

Its subcellular location is the secreted. The polypeptide is Putative defensin-like protein 233 (SCRL22) (Arabidopsis thaliana (Mouse-ear cress)).